Reading from the N-terminus, the 356-residue chain is Ribosomal RNA large subunit methyltransferase M (356 aa).

S-adenosyl-L-methionine contacts are provided by residues Ser-187, 220 to 223 (CPGG), Asp-239, Asp-259, and Asp-276. Catalysis depends on Lys-305, which acts as the Proton acceptor.

The protein belongs to the class I-like SAM-binding methyltransferase superfamily. RNA methyltransferase RlmE family. RlmM subfamily. Monomer.

Its subcellular location is the cytoplasm. The catalysed reaction is cytidine(2498) in 23S rRNA + S-adenosyl-L-methionine = 2'-O-methylcytidine(2498) in 23S rRNA + S-adenosyl-L-homocysteine + H(+). Catalyzes the 2'-O-methylation at nucleotide C2498 in 23S rRNA. The sequence is that of Ribosomal RNA large subunit methyltransferase M from Pseudoalteromonas atlantica (strain T6c / ATCC BAA-1087).